The following is a 1499-amino-acid chain: MRILANKTRLPHPRRREAPGSPPLSPRGHCPPAPAKPMHPENKLTNHGKTGNGGAQSQHQNVNQGPTCNVGSKGVGAGNHGAKANQISPSNSSLKNPQAGVPPFSSLKGKVKRDRSVSVDSGEQREAGTPSLDSEAKEVAPRSKRRCVLERKQPYSGDEWCSGPDSEEDDKPIGATHNCNVADPAMAAPQLGPGQTTQLPLSESSVPGAPHGPPPGLRPDAPGGGGGGGGVPGKPPSQFVYVFTTHLANTAAEAVLQGRADSILAYHQQNVPRAKLDQAPKVPPTPEPLPLSTPSAGTPQSQPPPLPPPPPPAPGSAPPALPPEGPPEDSSQDLAPNSVGAASTGGGTGGTHPNTPTATTANNPLPPGGDPSSAPGPALLGEAAAPGNGQRSLVGSEGLSKEQLEHRERSLQTLRDIERLLLRSGETEPFLKGPPGGAGEGGPPAQAPPPPQQPPTAPPSGLKKYEEPLQSMISQTQSLGGPPLEHEVPGHPPGGDMGQQMNMMIQRLGQDSLTPEQVAWRKLQEEYYEEKRRKEEQIGLHGSRPLQDMMGMGGMMVRGPPPPYHSKPGDQWPPGMGAQLRGPMDVQDPMQLRGGPPFPGPRFPGNQIQRVPGFGGMQSMPMEVPMNAMQRPVRPGMGWTEDLPPMGGPSNFAQNTMPYPGGQGEAERFMTPRVREELLRHQLLEKRSMGMQRPLGMAGSGMGQSMEMERMMQAHRQMDPAMFPGQMAGGEGLAGTPMGMEFGGGRGLLSPPMGQSGLREVDPPMGPGNLNMNMNVNMNMNMNLNVQMTPQQQMLMSQKMRGPGDLMGPQGLSPEEMARVRAQNSSGVMGGPQKMLMPSQFPNQGQQGFSGGQGPYQAMSQDMGNTQDMFSPDQSSMPMSNVGTTRLSHMPLPPASNPPGTVHSAPNRGLGRRPSDLTISINQMGSPGMGHLKSPTLSQVHSPLVTSPSANLKSPQTPSQMVPLPSANPPGPLKSPQVLGSSLSVRSPTGSPSRLKSPSMAVPSPGWVASPKTAMPSPGVSQNKQPPLNMNSSTTLSNMEQGTLPPSGPRSSSSAPPANPPSGLMNPSLPFTSSPDPTPSQNPLSLMMTQMSKYAMPSSTPLYHNAIKTIATSDDELLPDRPLLPPPPPPQGSGPGISNSQPSQMHLNSAAAQSPMGMNLPGQQPLSHEPPPAMLPSPTPLGSNIPLHPNAQGTGGPPQNSMMMAPGGPDSLNAPCGPVPSSSQMMPFPPRLQQPHGAMAPTGGGGGGPGLQQHYPSGMALPPEDLPNQPPGPMPPQQHLMGKAMAGRMGDAYPPGVLPGVASVLNDPELSEVIRPTPTGIPEFDLSRIIPSEKPSSTLQYFPKSENQPPKAQPPNLHLMNLQNMMAEQTPSRPPNLPGQQGVQRGLNMSMCHPGQMSLLGRTGVPPQQGMVPHGLHQGVMSPPQGLMTQQNFMLMKQRGVGGEVYSQPPHMLSPQGSLMGPPPQQNLMVSHPLRQRSVSLDSQMGYLPAPGGMANLPF.

Disordered regions lie at residues 1–238 and 271–500; these read MRIL…PPSQ and VPRA…MGQQ. Positions 20 to 37 are enriched in pro residues; that stretch reads GSPPLSPRGHCPPAPAKP. Residues Ser21 and Ser25 each carry the phosphoserine modification. An N6-acetyllysine modification is found at Lys36. Composition is skewed to polar residues over residues 45 to 70 and 85 to 96; these read TNHG…TCNV and NQISPSNSSLKN. A Phosphoserine modification is found at Ser88. N6-acetyllysine occurs at positions 108 and 110. Basic and acidic residues-rich tracts occupy residues 114 to 126 and 134 to 153; these read DRSV…EQRE and SEAK…ERKQ. Phosphoserine occurs at positions 116 and 118. N6-acetyllysine is present on Lys137. Polar residues predominate over residues 193–205; the sequence is PGQTTQLPLSESS. The span at 222 to 232 shows a compositional bias: gly residues; the sequence is PGGGGGGGGVP. Pro residues-rich tracts occupy residues 281–291 and 301–325; these read KVPPTPEPLPL and SQPP…PPEG. Residues 304–533 form a necessary for interaction with CTNNB1 region; that stretch reads PPLPPPPPPA…QEEYYEEKRR (230 aa). 2 stretches are compositionally biased toward low complexity: residues 351 to 363 and 370 to 387; these read THPN…TANN and DPSS…AAPG. A compositionally biased stretch (basic and acidic residues) spans 399–421; the sequence is LSKEQLEHRERSLQTLRDIERLL. A Phosphoserine modification is found at Ser424. Residues 445–458 show a composition bias toward pro residues; it reads AQAPPPPQQPPTAP. The residue at position 514 (Thr514) is a Phosphothreonine. Arg680 is subject to Asymmetric dimethylarginine. Phosphoserine is present on residues Ser750, Ser813, Ser915, Ser926, Ser938, Ser942, Ser947, Ser975, Ser987, Ser991, Ser997, Ser1004, Ser1010, and Ser1017. Disordered stretches follow at residues 888–1084 and 1116–1201; these read SHMP…QNPL and ELLP…PQNS. A compositionally biased stretch (polar residues) spans 935–960; the sequence is PTLSQVHSPLVTSPSANLKSPQTPSQ. Polar residues predominate over residues 978–996; the sequence is VLGSSLSVRSPTGSPSRLK. 2 stretches are compositionally biased toward polar residues: residues 1019–1041 and 1069–1084; these read GVSQ…NMEQ and LPFT…QNPL. Composition is skewed to pro residues over residues 1122-1132 and 1168-1179; these read PLLPPPPPPQG and HEPPPAMLPSPT. A Glycyl lysine isopeptide (Lys-Gly) (interchain with G-Cter in SUMO2) cross-link involves residue Lys1344.

It belongs to the BCL9 family. Found in a complex with CDC73; CTNNB1 and PYGO1. Interacts with CTNNB1. In terms of tissue distribution, expressed in breast, ductal and invasive ductal carcinomas of the breast, sporadic colorectal adenomas and carcinomas (at protein level). Expressed in fetal brain. Expressed in lung, amygdala, eye, prostate, pancreatic and prostate cancers, head and neck tumors and embryonal tumor.

The protein localises to the nucleus. In terms of biological role, transcriptional regulator that acts as an activator. Promotes beta-catenin transcriptional activity. Plays a role in tumorigenesis. Enhances the neoplastic transforming activity of CTNNB1. This is B-cell CLL/lymphoma 9-like protein (BCL9L) from Homo sapiens (Human).